A 353-amino-acid polypeptide reads, in one-letter code: E3 ubiquitin-protein ligase TRIM63 (353 aa).

The RING-type zinc-finger motif lies at 23–79 (CPICLEMFTKPVVILPCQHNLCRKCANDIFQAANPYWTSRGSSVSMSGGRFRCPTCR). Positions 74–218 (RCPTCRHEVI…LSQKFDTLYA (145 aa)) are interaction with TTN. The segment at 117–159 (GSHPMCKEHEDEKINIYCLTCEVPTCSMCKVFGIHKACEVAPL) adopts a B box-type zinc-finger fold. Zn(2+) contacts are provided by Cys122, His125, Cys145, and His151. A coiled-coil region spans residues 207–269 (EELSQKFDTL…VETAIQSLDE (63 aa)). One can recognise a COS domain in the interval 267-325 (LDEPGGATFLLTAKQLIKSIVEASKGCQLGKTEQGFENMDFFTLDLEHIADALRAIDFG). Residues 326–344 (TDEEEEEFIEEEDQEEEES) show a composition bias toward acidic residues. Residues 326–353 (TDEEEEEFIEEEDQEEEESTEGKEEGHQ) form a disordered region.

As to quaternary structure, homodimer. Homooligomer and heterooligomer. Interacts with SUMO2, titin/TTN and GMEB1. Interacts with TRIM54 and probably with TRIM55 and TNNI3. Forms a ternary complex with RACK1 and PRKCE. Interacts with CKM. Muscle specific. Selectively expressed in heart and skeletal muscle. Also expressed in the iris.

The protein localises to the cytoplasm. The protein resides in the nucleus. It localises to the myofibril. Its subcellular location is the sarcomere. It is found in the m line. The protein localises to the z line. It catalyses the reaction S-ubiquitinyl-[E2 ubiquitin-conjugating enzyme]-L-cysteine + [acceptor protein]-L-lysine = [E2 ubiquitin-conjugating enzyme]-L-cysteine + N(6)-ubiquitinyl-[acceptor protein]-L-lysine.. The protein operates within protein modification; protein ubiquitination. Functionally, E3 ubiquitin ligase. Mediates the ubiquitination and subsequent proteasomal degradation of CKM, GMEB1 and HIBADH. Regulates the proteasomal degradation of muscle proteins under amino acid starvation, where muscle protein is catabolized to provide other organs with amino acids. Inhibits de novo skeletal muscle protein synthesis under amino acid starvation. Regulates proteasomal degradation of cardiac troponin I/TNNI3 and probably of other sarcomeric-associated proteins. May play a role in striated muscle atrophy and hypertrophy by regulating an anti-hypertrophic PKC-mediated signaling pathway. May regulate the organization of myofibrils through TTN in muscle cells. This Homo sapiens (Human) protein is E3 ubiquitin-protein ligase TRIM63 (TRIM63).